The following is a 339-amino-acid chain: tRNA N6-adenosine threonylcarbamoyltransferase (339 aa).

Residues His-117 and His-121 each coordinate Fe cation. Substrate-binding positions include 140-144 (VVSGG), Asp-173, Gly-186, and Asn-279. Asp-307 contacts Fe cation.

It belongs to the KAE1 / TsaD family. It depends on Fe(2+) as a cofactor.

The protein localises to the cytoplasm. It carries out the reaction L-threonylcarbamoyladenylate + adenosine(37) in tRNA = N(6)-L-threonylcarbamoyladenosine(37) in tRNA + AMP + H(+). Its function is as follows. Required for the formation of a threonylcarbamoyl group on adenosine at position 37 (t(6)A37) in tRNAs that read codons beginning with adenine. Is involved in the transfer of the threonylcarbamoyl moiety of threonylcarbamoyl-AMP (TC-AMP) to the N6 group of A37, together with TsaE and TsaB. TsaD likely plays a direct catalytic role in this reaction. The sequence is that of tRNA N6-adenosine threonylcarbamoyltransferase from Syntrophomonas wolfei subsp. wolfei (strain DSM 2245B / Goettingen).